We begin with the raw amino-acid sequence, 184 residues long: dCTP deaminase (184 aa).

DCTP-binding positions include 107 to 112 (KSTYAR), 131 to 133 (TLE), Gln-152, Tyr-166, and Gln-176. Glu-133 (proton donor/acceptor) is an active-site residue.

Belongs to the dCTP deaminase family. In terms of assembly, homotrimer.

It carries out the reaction dCTP + H2O + H(+) = dUTP + NH4(+). Its pathway is pyrimidine metabolism; dUMP biosynthesis; dUMP from dCTP (dUTP route): step 1/2. Catalyzes the deamination of dCTP to dUTP. The sequence is that of dCTP deaminase from Rhodospirillum centenum (strain ATCC 51521 / SW).